Reading from the N-terminus, the 1017-residue chain is Formin-binding protein 4 (1017 aa).

2 disordered regions span residues 1–141 and 160–202; these read MGKK…STDI and PAAP…TSGW. At serine 18 the chain carries Phosphoserine. Over residues 40–69 the composition is skewed to low complexity; the sequence is DSTAAVPSQPAPSAATTTTTAVTAAAASDD. Phosphoserine occurs at positions 116 and 124. Polar residues predominate over residues 130–141; the sequence is SKETNGNQSTDI. The residue at position 172 (threonine 172) is a Phosphothreonine. The span at 181–200 shows a compositional bias: low complexity; that stretch reads AATSTLSSSTSNGTDSTQTS. A WW 1 domain is found at 214–248; it reads GIEMGDWQEVWDENTGCYYYWNTQTNEVTWELPQY. An N6-acetyllysine modification is found at lysine 290. Lysine 301 participates in a covalent cross-link: Glycyl lysine isopeptide (Lys-Gly) (interchain with G-Cter in SUMO1). Residue lysine 335 forms a Glycyl lysine isopeptide (Lys-Gly) (interchain with G-Cter in SUMO2) linkage. Lysine 348 participates in a covalent cross-link: Glycyl lysine isopeptide (Lys-Gly) (interchain with G-Cter in SUMO1); alternate. Lysine 348 participates in a covalent cross-link: Glycyl lysine isopeptide (Lys-Gly) (interchain with G-Cter in SUMO2); alternate. Disordered stretches follow at residues 421–519, 621–676, 706–792, and 899–994; these read LEEG…TTPK, ESQW…CKES, PLPL…IKRK, and TATI…AERN. 5 positions are modified to phosphoserine: serine 427, serine 432, serine 435, serine 438, and serine 442. The segment covering 428–442 has biased composition (polar residues); it reads VSGSSPRSDISQPAS. A compositionally biased stretch (basic residues) spans 449–458; the sequence is LMSKRGKWKM. Positions 461-474 are enriched in low complexity; it reads RATSPESTSRSSSK. Serine 464 bears the Phosphoserine mark. Residue threonine 479 is modified to Phosphothreonine. Residues 491–513 show a composition bias toward basic and acidic residues; it reads NSEKIDENSDKEMEVEESPEKIK. Phosphoserine occurs at positions 499 and 508. Phosphothreonine occurs at positions 516 and 517. Residue lysine 519 forms a Glycyl lysine isopeptide (Lys-Gly) (interchain with G-Cter in SUMO1); alternate linkage. Lysine 519 participates in a covalent cross-link: Glycyl lysine isopeptide (Lys-Gly) (interchain with G-Cter in SUMO2); alternate. One can recognise a WW 2 domain in the interval 595–629; that stretch reads NATPKGWSCHWDRDHRRYFYVNEQSGESQWEFPDG. Residues 627-637 are compositionally biased toward acidic residues; the sequence is PDGEEEEEESQ. Over residues 640-656 the composition is skewed to basic and acidic residues; the sequence is ENRDETLAKQTLKDKTG. The span at 657 to 671 shows a compositional bias: low complexity; the sequence is TDSNSTESSETSTGS. Residues 706 to 732 are compositionally biased toward pro residues; it reads PLPLEMPPPPPPPPESPPPPPPPPPPA. Residues 733-748 are compositionally biased toward acidic residues; it reads EDGEIQEVEMEDEGSE. Over residues 764–786 the composition is skewed to low complexity; it reads SAQTTVVTSQSSVDSTISSSSST. Pro residues predominate over residues 904–925; sequence EPPPPPPPPPPPPPPAPKMPPP. A compositionally biased stretch (basic residues) spans 929-941; sequence KKGRKDKAKKSKT. Residues 957–970 are compositionally biased toward acidic residues; that stretch reads LDEEDNSSSSEEDR. Phosphoserine is present on residues serine 963, serine 964, and serine 965. The segment covering 971–982 has biased composition (basic and acidic residues); sequence ESTAQKRIEEWK.

In terms of assembly, binds FMN1. Interacts with the Arg/Gly-rich-flanked Pro-rich of KHDRBS1/SAM68. Arginine methylation in these regions has no effect on this binding. In terms of tissue distribution, highly expressed in the eye.

The polypeptide is Formin-binding protein 4 (FNBP4) (Homo sapiens (Human)).